Here is a 256-residue protein sequence, read N- to C-terminus: Small ribosomal subunit protein eS1A (256 aa).

Residue Ala2 is modified to N-acetylalanine; partial.

This sequence belongs to the eukaryotic ribosomal protein eS1 family. As to quaternary structure, component of the small ribosomal subunit. Mature ribosomes consist of a small (40S) and a large (60S) subunit. The 40S subunit contains about 33 different proteins and 1 molecule of RNA (18S). The 60S subunit contains about 49 different proteins and 3 molecules of RNA (25S, 5.8S and 5S).

It is found in the cytoplasm. In Scheffersomyces stipitis (strain ATCC 58785 / CBS 6054 / NBRC 10063 / NRRL Y-11545) (Yeast), this protein is Small ribosomal subunit protein eS1A.